A 446-amino-acid polypeptide reads, in one-letter code: Nuclear envelope morphology protein 1 (446 aa).

Residues 53–80 are disordered; that stretch reads VDQQYDHSSSHLKESDQNQERKNSVPKK. Over residues 56 to 75 the composition is skewed to basic and acidic residues; the sequence is QYDHSSSHLKESDQNQERKN. Residues 87–103 form a helical membrane-spanning segment; the sequence is ILIEKIASILWALLLFL. The segment at 132 to 168 is disordered; sequence HTDKRNRGSNASENELPVSSSNINDSSEKTNPKNCNL. Positions 139 to 156 are enriched in polar residues; sequence GSNASENELPVSSSNIND. The FCP1 homology domain occupies 247–424; sequence NTQKKKKLVI…LNLLPFLEAM (178 aa).

This sequence belongs to the Dullard family. In terms of assembly, component of the NEM1-SPO7 complex.

The protein resides in the endoplasmic reticulum membrane. It is found in the nucleus membrane. It catalyses the reaction O-phospho-L-seryl-[protein] + H2O = L-seryl-[protein] + phosphate. The enzyme catalyses O-phospho-L-threonyl-[protein] + H2O = L-threonyl-[protein] + phosphate. Catalytic component of the NEM1-SPO7 complex which acts as a phosphatase and dephosphorylates the phosphatidic acid phosphohydrolase PAH1. Essential for the formation of a spherical nucleus and meiotic division. The NEM1-SPOo7 protein phosphatase is required for efficient mitophagy under prolonged respiration, as well as for reticulophagy and pexophagy. The polypeptide is Nuclear envelope morphology protein 1 (NEM1) (Saccharomyces cerevisiae (strain ATCC 204508 / S288c) (Baker's yeast)).